We begin with the raw amino-acid sequence, 906 residues long: Inactive angiotensin-converting enzyme-related protein (906 aa).

An N-terminal signal peptide occupies residues 1–19 (MKFHILLLLLVGACLPVFT). Positions 28–95 (LLPADEAPKD…SPTPEPEPAI (68 aa)) are disordered. Positions 67 to 83 (PEPKPEPEPEPEPKPEP) are enriched in basic and acidic residues. Asparagine 159 carries N-linked (GlcNAc...) asparagine glycosylation. The 591-residue stretch at 175–765 (IKDEEKLRSW…EIDQVVVGWD (591 aa)) folds into the Peptidase M2 domain. Cysteine 289 and cysteine 297 are joined by a disulfide. Asparagine 653 carries an N-linked (GlcNAc...) asparagine glycan. Residues 862 to 882 (VTTPEPSAEPEPTAKTTTKMP) form a disordered region. The segment covering 863-882 (TTPEPSAEPEPTAKTTTKMP) has biased composition (low complexity).

Belongs to the peptidase M2 family. Expressed in the hypodermis, in the vulva during organogenesis, and in the ray papillae of the male tail.

In terms of biological role, inactive as a metallopeptidase, due to a lack of active site residues. Required for larval molting, male tail development, and formation of adult alae. Acts in the heterochronic pathway and plays a role in the developmental timing of postembryonic hypodermal seam cell division and adult alae production. Acts synergistically with apl-1 in let-7 regulated postembryonic cell division events. Might act downstream of the heterochronic protein lin-41. Negative regulator of lifespan, heat and oxidative stress response and age-related degenerative changes like reduced pharyngeal pumping and decreased body movements. Lifespan restriction is dependent on the forkhead-type transcription factor daf-16. This is Inactive angiotensin-converting enzyme-related protein from Caenorhabditis elegans.